A 142-amino-acid polypeptide reads, in one-letter code: MAPKKKVVGLIKLQIKAGEANPAPPVGPALGQHGVNIMEFCKAYNAATESQRGNVIPVEISVYEDRSFTFALKTPPAAKLLLKAAGVPKGSGEPHKTKVAKVSWDQVREIAETKKEDLNANDIDAAAKIIAGTARSMGITVE.

It belongs to the universal ribosomal protein uL11 family. As to quaternary structure, part of the ribosomal stalk of the 50S ribosomal subunit. Interacts with L10 and the large rRNA to form the base of the stalk. L10 forms an elongated spine to which L12 dimers bind in a sequential fashion forming a multimeric L10(L12)X complex. In terms of processing, one or more lysine residues are methylated.

In terms of biological role, forms part of the ribosomal stalk which helps the ribosome interact with GTP-bound translation factors. In Mycobacteroides abscessus (strain ATCC 19977 / DSM 44196 / CCUG 20993 / CIP 104536 / JCM 13569 / NCTC 13031 / TMC 1543 / L948) (Mycobacterium abscessus), this protein is Large ribosomal subunit protein uL11.